Consider the following 279-residue polypeptide: Malonyl-[acyl-carrier protein] O-methyltransferase (279 aa).

Belongs to the methyltransferase superfamily.

It catalyses the reaction malonyl-[ACP] + S-adenosyl-L-methionine = malonyl-[ACP] methyl ester + S-adenosyl-L-homocysteine. Its pathway is cofactor biosynthesis; biotin biosynthesis. In terms of biological role, converts the free carboxyl group of a malonyl-thioester to its methyl ester by transfer of a methyl group from S-adenosyl-L-methionine (SAM). It allows to synthesize pimeloyl-ACP via the fatty acid synthetic pathway. This Hahella chejuensis (strain KCTC 2396) protein is Malonyl-[acyl-carrier protein] O-methyltransferase.